The primary structure comprises 389 residues: MAAGKRDYYEVLGISKNASSQDIKRAFRKLAMQYHPDRHKAENETTQKQNEEKFKEVNEAYEVLSDEEKRKLYDQFGHEGLNASGFHEAGFNPFDIFNSVFGEGFSFGMDGDSPFDFIFNRSKKRQQQIVVPYNLDIALVIEINFFEMTNGCNKTIKYERKVSCHSCNGFGAEGGESGLDLCKDCNGNGFVIKNQRSIFGTIQSQVLCSTCNGQGKQIKVKCKTCRSNKYTVTNQIKEINIPAGMYSGEALVDESGGNEFKGHYGKLIIQVNVLASKIFKRSDNNVIANVLVDPMVAIVGGVIELPTLEGIKEFNIRPGTKSGEQIVIPNGGIKFSKSFKRKAGDLIIIISYARPCEYTNLELKKLREFIKPNQEVKQYLNTLKNEYKT.

The J domain occupies 5-79 (KRDYYEVLGI…RKLYDQFGHE (75 aa)). Residues 151–234 (GCNKTIKYER…CRSNKYTVTN (84 aa)) form a CR-type zinc finger. The Zn(2+) site is built by C164, C167, C182, C185, C208, C211, C222, and C225. 4 CXXCXGXG motif repeats span residues 164-171 (CHSCNGFG), 182-189 (CKDCNGNG), 208-215 (CSTCNGQG), and 222-229 (CKTCRSNK).

It belongs to the DnaJ family. As to quaternary structure, homodimer. The cofactor is Zn(2+).

The protein resides in the cytoplasm. Participates actively in the response to hyperosmotic and heat shock by preventing the aggregation of stress-denatured proteins and by disaggregating proteins, also in an autonomous, DnaK-independent fashion. Unfolded proteins bind initially to DnaJ; upon interaction with the DnaJ-bound protein, DnaK hydrolyzes its bound ATP, resulting in the formation of a stable complex. GrpE releases ADP from DnaK; ATP binding to DnaK triggers the release of the substrate protein, thus completing the reaction cycle. Several rounds of ATP-dependent interactions between DnaJ, DnaK and GrpE are required for fully efficient folding. Also involved, together with DnaK and GrpE, in the DNA replication of plasmids through activation of initiation proteins. This chain is Chaperone protein DnaJ, found in Mycoplasma genitalium (strain ATCC 33530 / DSM 19775 / NCTC 10195 / G37) (Mycoplasmoides genitalium).